Consider the following 177-residue polypeptide: ATP-dependent protease subunit HslV (177 aa).

Residue Thr2 is part of the active site. Na(+)-binding residues include Gly157, Cys160, and Thr163.

The protein belongs to the peptidase T1B family. HslV subfamily. As to quaternary structure, a double ring-shaped homohexamer of HslV is capped on each side by a ring-shaped HslU homohexamer. The assembly of the HslU/HslV complex is dependent on binding of ATP.

It is found in the cytoplasm. It carries out the reaction ATP-dependent cleavage of peptide bonds with broad specificity.. Allosterically activated by HslU binding. In terms of biological role, protease subunit of a proteasome-like degradation complex believed to be a general protein degrading machinery. The protein is ATP-dependent protease subunit HslV of Aeromonas salmonicida (strain A449).